The following is a 124-amino-acid chain: Large ribosomal subunit protein uL22 (124 aa).

The protein belongs to the universal ribosomal protein uL22 family. In terms of assembly, part of the 50S ribosomal subunit.

In terms of biological role, this protein binds specifically to 23S rRNA; its binding is stimulated by other ribosomal proteins, e.g. L4, L17, and L20. It is important during the early stages of 50S assembly. It makes multiple contacts with different domains of the 23S rRNA in the assembled 50S subunit and ribosome. The globular domain of the protein is located near the polypeptide exit tunnel on the outside of the subunit, while an extended beta-hairpin is found that lines the wall of the exit tunnel in the center of the 70S ribosome. This is Large ribosomal subunit protein uL22 from Synechococcus sp. (strain JA-2-3B'a(2-13)) (Cyanobacteria bacterium Yellowstone B-Prime).